The chain runs to 215 residues: Pyrrolidone-carboxylate peptidase (215 aa).

Residues E80, C143, and H167 contribute to the active site.

It belongs to the peptidase C15 family. Homotetramer.

The protein localises to the cytoplasm. It carries out the reaction Release of an N-terminal pyroglutamyl group from a polypeptide, the second amino acid generally not being Pro.. Functionally, removes 5-oxoproline from various penultimate amino acid residues except L-proline. In Pectobacterium carotovorum subsp. carotovorum (strain PC1), this protein is Pyrrolidone-carboxylate peptidase.